The following is a 433-amino-acid chain: MSSPSRSVSLFERAQKTIPGGVNSPVRAFRSVGGTPRFIAKAAGPYLWDADGTRLIDYVGSWGPMIVGHAHPEVVRAVQQVAADSFSFGAPTEAEVVMAETLCELVPSIEQVRLVSSGTEATMSALRLARGFTGRDLIVKFEGCYHGHADSLLVKAGSGLLTFADTTQNAPSSAGVPEDVVKHTMVLPYNDADALREAFARHGKEIAAVIVEPVAGNMNLVRATAAFLQAMRALCTEHGAVLIFDEVMTGFRVALGCAQALYGITPDLTCLGKVIGGGMPAAAFGGRRDIMGFLAPLGSVYQAGTLSGNPLAVAAGVTTLRLIAADGFHDRLAAQTRKLVDGLAGIARDAGVPFAADSVGGMFGLYFREGVPTSFAEVTQSDVGRFNAFFHAMLAEGVYLAPSAFEAGFVSSMHDDAVLEATFEAARRAFKAV.

Residue Lys273 is modified to N6-(pyridoxal phosphate)lysine.

The protein belongs to the class-III pyridoxal-phosphate-dependent aminotransferase family. HemL subfamily. As to quaternary structure, homodimer. It depends on pyridoxal 5'-phosphate as a cofactor.

The protein localises to the cytoplasm. The enzyme catalyses (S)-4-amino-5-oxopentanoate = 5-aminolevulinate. Its pathway is porphyrin-containing compound metabolism; protoporphyrin-IX biosynthesis; 5-aminolevulinate from L-glutamyl-tRNA(Glu): step 2/2. The sequence is that of Glutamate-1-semialdehyde 2,1-aminomutase from Ralstonia nicotianae (strain ATCC BAA-1114 / GMI1000) (Ralstonia solanacearum).